The chain runs to 305 residues: Phosphatidylinositol:ceramide inositolphosphotransferase 2 (305 aa).

6 helical membrane passes run 34–54 (LLAG…VHYI), 81–101 (ETVF…PFIL), 105–125 (KIYT…CQFL), 168–188 (VMYG…LVFV), 198–218 (RFIK…IIAS), and 221–241 (HYSV…FCLD). Histidine 180 is a catalytic residue. Catalysis depends on residues histidine 221 and aspartate 225.

Belongs to the sphingomyelin synthase family. As to expression, expressed in leaves, roots, stems, flowers and siliques.

The protein resides in the golgi apparatus. It is found in the trans-Golgi network membrane. The catalysed reaction is an N-(2R-hydroxy-very-long-chain fatty acyl)-(R)-4-hydroxysphingoid base + a 1,2-diacyl-sn-glycero-3-phospho-(1D-myo-inositol) = a 1D-myo-inositol-1-phospho-N-[(R)-2-hydroxy-very-long-chain fatty acyl]-(R)-4-hydroxysphingoid base + a 1,2-diacyl-sn-glycerol. The protein operates within sphingolipid metabolism. Functionally, catalyzes the transfer of the phosphorylinositol group from phosphatidylinositol (PI) to phytoceramide, an essential step in sphingolipid biosynthesis. May play an important role in modulating plant programmed cell death (PCD) associated with defense (e.g. toward Golovinomyces cichoracearum) by promoting sphingolipid metabolism and thus regulating ceramide accumulation. This chain is Phosphatidylinositol:ceramide inositolphosphotransferase 2, found in Arabidopsis thaliana (Mouse-ear cress).